A 182-amino-acid polypeptide reads, in one-letter code: UPF0397 protein llmg_0343 (182 aa).

5 helical membrane passes run 8-28, 42-62, 74-94, 114-134, and 146-166; these read IVVA…LINI, AVLA…IGFI, APWW…GFGV, IVQF…GDIL, and QGVV…TLLL.

Belongs to the UPF0397 family.

The protein resides in the cell membrane. This chain is UPF0397 protein llmg_0343, found in Lactococcus lactis subsp. cremoris (strain MG1363).